The following is a 185-amino-acid chain: Transcription factor E (185 aa).

The region spanning 5 to 88 (KNKELLEIAQ…YWRLETKKLP (84 aa)) is the HTH TFE/IIEalpha-type domain.

Belongs to the TFE family. Monomer. Interaction with RNA polymerase subunits RpoF and RpoE is necessary for Tfe stimulatory transcription activity. Able to interact with Tbp and RNA polymerase in the absence of DNA promoter. Interacts both with the preinitiation and elongation complexes.

Functionally, transcription factor that plays a role in the activation of archaeal genes transcribed by RNA polymerase. Facilitates transcription initiation by enhancing TATA-box recognition by TATA-box-binding protein (Tbp), and transcription factor B (Tfb) and RNA polymerase recruitment. Not absolutely required for transcription in vitro, but particularly important in cases where Tbp or Tfb function is not optimal. It dynamically alters the nucleic acid-binding properties of RNA polymerases by stabilizing the initiation complex and destabilizing elongation complexes. Seems to translocate with the RNA polymerase following initiation and acts by binding to the non template strand of the transcription bubble in elongation complexes. In Thermococcus kodakarensis (strain ATCC BAA-918 / JCM 12380 / KOD1) (Pyrococcus kodakaraensis (strain KOD1)), this protein is Transcription factor E.